A 445-amino-acid polypeptide reads, in one-letter code: MAERKYFGTDGVRGLVGQSPITPEFVMKLGWAAGKVLAKQGTKKVIIGKDTRISGYMLESALEAGLAAAGLKAKFTGPMPTPAVAYLTQTFRAEAGIVISASHNPYYDNGIKFFSSEGTKLPDDVEMAIEAELDKPMTCVESALLGKASRLNDAAGRYIEFCKSTFPKELSLAGVKMVVDCAHGATYHIAPNVFKELGAEIITIGCEPNGTNINHEVGATDVRALQAKVLEEKADFGVAFDGDGDRIIMVDDLGNKVDGDQIAYIIARDALRRGELKGGVVGTLMTNMGMEVALRNLGIPFVRSNVGDRYVMEKLLENNWKIGAENSGHVILLDKVTTGDAIVAALQVIASIVGSKMSLKELCNGMTLFPQVLENIRFVGDNNPLDTELVKAAQADVETKLGDNGRVLLRKSGTEPLIRVMVEGENAELVQQYALQIVDAVKESC.

Serine 102 (phosphoserine intermediate) is an active-site residue. Mg(2+) contacts are provided by serine 102, aspartate 241, aspartate 243, and aspartate 245. Serine 102 is modified (phosphoserine).

The protein belongs to the phosphohexose mutase family. Mg(2+) serves as cofactor. Post-translationally, activated by phosphorylation.

It catalyses the reaction alpha-D-glucosamine 1-phosphate = D-glucosamine 6-phosphate. Catalyzes the conversion of glucosamine-6-phosphate to glucosamine-1-phosphate. This Aliivibrio salmonicida (strain LFI1238) (Vibrio salmonicida (strain LFI1238)) protein is Phosphoglucosamine mutase.